The primary structure comprises 269 residues: Putative pyridoxine kinase (269 aa).

An ATP-binding site is contributed by Asn-139. Glu-142 contacts Mg(2+). ATP contacts are provided by residues 176-180 (KGGGR), Asp-189, Val-205, Gly-214, and Lys-239.

Belongs to the ThiD family.

It catalyses the reaction pyridoxal + ATP = pyridoxal 5'-phosphate + ADP + H(+). In terms of biological role, phosphorylates B6 vitamers; functions in a salvage pathway. Uses pyridoxal, pyridoxine, and pyridoxamine as substrates. The sequence is that of Putative pyridoxine kinase (pdxK) from Treponema pallidum (strain Nichols).